Consider the following 250-residue polypeptide: ATP synthase subunit a (250 aa).

The next 6 membrane-spanning stretches (helical) occupy residues 29–49 (ASLF…FATS), 84–104 (FFPL…LGMF), 114–134 (IIVT…YGFY), 143–163 (VFVP…IEII), 193–213 (FVAS…LPLI), and 216–236 (VALT…FAVL).

It belongs to the ATPase A chain family. As to quaternary structure, F-type ATPases have 2 components, CF(1) - the catalytic core - and CF(0) - the membrane proton channel. CF(1) has five subunits: alpha(3), beta(3), gamma(1), delta(1), epsilon(1). CF(0) has three main subunits: a(1), b(2) and c(9-12). The alpha and beta chains form an alternating ring which encloses part of the gamma chain. CF(1) is attached to CF(0) by a central stalk formed by the gamma and epsilon chains, while a peripheral stalk is formed by the delta and b chains.

It localises to the cell inner membrane. Key component of the proton channel; it plays a direct role in the translocation of protons across the membrane. The polypeptide is ATP synthase subunit a (Rhizobium leguminosarum bv. trifolii (strain WSM2304)).